The sequence spans 675 residues: PTS system glucose-specific EIICBA component (675 aa).

The 412-residue stretch at 3–414 (KKFFGQLQRI…FNFKTPGRED (412 aa)) folds into the PTS EIIC type-1 domain. 11 helical membrane-spanning segments follow: residues 16-36 (LMLP…GNAF), 63-83 (AGGI…AIGL), 89-109 (VAAI…GMFL), 126-146 (VLGI…GALA), 170-190 (FVPI…AIIW), 199-219 (AFSE…FGFI), 273-293 (FMQG…LAIY), 303-323 (VVAG…ITEP), 329-349 (LFVA…SFLI), 355-375 (LHLG…GILP), and 383-403 (VIPV…FLIV). The PTS EIIB type-1 domain maps to 425 to 506 (SELPFKVLDA…QQIMDGKITS (82 aa)). Residue Cys-447 is the Phosphocysteine intermediate; for EIIB activity of the active site. Positions 547–651 (DKVFSEKMMG…STITPIVVTN (105 aa)) constitute a PTS EIIA type-1 domain. His-599 (tele-phosphohistidine intermediate; for EIIA activity) is an active-site residue.

It is found in the cell membrane. It catalyses the reaction N(pros)-phospho-L-histidyl-[protein] + D-glucose(out) = D-glucose 6-phosphate(in) + L-histidyl-[protein]. Inhibited by 2-deoxyglucose and methyl beta-D-glucoside, but not by methyl alpha-D-glucoside, p-nitrophenyl alpha-D-glucoside, o-nitrophenyl beta-D-glucoside and salicin. The phosphoenolpyruvate-dependent sugar phosphotransferase system (sugar PTS), a major carbohydrate active transport system, catalyzes the phosphorylation of incoming sugar substrates concomitantly with their translocation across the cell membrane. This system is involved in glucose transport. Cannot transport galactose, fructose, mannose, cellobiose, sucrose, maltose, lactose, melibiose and trehalose, as well as N-acetylglucosamine. The protein is PTS system glucose-specific EIICBA component (ptsG) of Staphylococcus carnosus (strain TM300).